The chain runs to 1037 residues: Exportin-T (1037 aa).

The protein belongs to the exportin family.

Its subcellular location is the nucleus. It is found in the cytoplasm. Functionally, tRNA nucleus export receptor which facilitates tRNA translocation across the nuclear pore complex. Involved in pre-tRNA splicing, probably by affecting the interaction of pre-tRNA with splicing endonuclease. The protein is Exportin-T (los1) of Neosartorya fischeri (strain ATCC 1020 / DSM 3700 / CBS 544.65 / FGSC A1164 / JCM 1740 / NRRL 181 / WB 181) (Aspergillus fischerianus).